The chain runs to 308 residues: Ribosomal RNA small subunit methyltransferase H (308 aa).

Residues 36-38 (GGH), D55, F86, D103, and Q110 each bind S-adenosyl-L-methionine.

It belongs to the methyltransferase superfamily. RsmH family.

The protein localises to the cytoplasm. The catalysed reaction is cytidine(1402) in 16S rRNA + S-adenosyl-L-methionine = N(4)-methylcytidine(1402) in 16S rRNA + S-adenosyl-L-homocysteine + H(+). Specifically methylates the N4 position of cytidine in position 1402 (C1402) of 16S rRNA. This is Ribosomal RNA small subunit methyltransferase H from Helicobacter pylori (strain B38).